The sequence spans 926 residues: MASPGIEVELLVKGHSDLGEVAPEVKPSDSQTSVAIADLEWREMEGDDCGFHYGDGTNEAQDNDFPTVERSRLQEMLSLLGLETYQAQKLTLQDSLQISFDSMKNWAPQVPKDLPWHFLRKLQALNAEARNTTMVLDVPPEAWPAEKESQAEEEMMYWDPAEDVAADIYSFSELPMPDTPVNPLDLLCALLLSSDTFLQQEVLLKMSLCQFALPLVLPDSENHYHTFLLWALRGVVRTWWFQPLRSLGSFREDSVVLSRVPTFAFVRMDVSSNSKSQLLNAVLSPARRQWDCFWHRDLNLGTNPREISDGLVEISWFFPSGKEDLDVFPEPMAFLNLRGDIGSHWLQFKLLTEVSSAVFILTDNISKKEYKLLYSMKESTTKYYFILSPYRGKRNTNLRFLNRLIPVLKIDHSHVLVKVSSTDSEGFVRRIRAIMCSVARSPCRRVSVEDMAHAARKLGLRVDEDFEECQKAKDRMEKILRKIKDVDAYKRDELRLQGEPARRAAQAEREFCQLQWVPEPPEKHRAELRRRVLELRVQQNGQEPTSGVQEFILGISSPSPSERQYFLRWMEWGLARLGQPRPRQPPETLLTLRPKLGGPSDLTEPLWPEPLGVEHFLREMGQFYEAESCLIEAGRLPAGQRRFAHFPGVAVELLLGGLPLELVDGATLSIPVRWVTGLLKELHTRLDRRSRLVVLSALGVPGTGKSTLLNTMFGLKFATGRSCSPRGAFMQLLPVAEGFSQDLGCDQILVIDSGGLISGALASAGDRFELEASLATLLMGLSNVTVVSLAETKDIPPAVLHAFLRLEKMGHMPNYQFVYQNLHDLPVPSPKPRDRRQLLDPPSDLSRATHLEKQGGGFRTLAGLAERQHVWHIPALWHGAPPMAAVSLGYSEAIFELKRCLLENIRNGLSNQNQNIQQLIELLRRL.

S3 bears the Phosphoserine mark. The VLIG-type G domain occupies R689–R924.

Belongs to the TRAFAC class dynamin-like GTPase superfamily. Very large inducible GTPase (VLIG) family.

It is found in the cytoplasm. It localises to the nucleus. In terms of biological role, may be involved in cell cycle progression through the regulation of cyclin D1 expression. The sequence is that of Up-regulator of cell proliferation (Urgcp) from Mus musculus (Mouse).